Reading from the N-terminus, the 124-residue chain is Fluoride-specific ion channel FluC (124 aa).

The next 4 membrane-spanning stretches (helical) occupy residues 4–24 (FLAV…LGLW), 34–54 (LGTL…LAWF), 67–87 (FVIT…AEVV), and 100–120 (LIAF…FYSL). Residues glycine 74 and threonine 77 each contribute to the Na(+) site.

Belongs to the fluoride channel Fluc/FEX (TC 1.A.43) family.

The protein resides in the cell inner membrane. The enzyme catalyses fluoride(in) = fluoride(out). Its activity is regulated as follows. Na(+) is not transported, but it plays an essential structural role and its presence is essential for fluoride channel function. Fluoride-specific ion channel. Important for reducing fluoride concentration in the cell, thus reducing its toxicity. This is Fluoride-specific ion channel FluC from Thiobacillus denitrificans (strain ATCC 25259 / T1).